Reading from the N-terminus, the 121-residue chain is Trypsin/alpha-amylase inhibitor CMX2 (121 aa).

The N-terminal stretch at methionine 1 to serine 24 is a signal peptide.

This sequence belongs to the protease inhibitor I6 (cereal trypsin/alpha-amylase inhibitor) family.

The protein resides in the secreted. In Triticum aestivum (Wheat), this protein is Trypsin/alpha-amylase inhibitor CMX2.